A 1279-amino-acid polypeptide reads, in one-letter code: ATP-dependent helicase/nuclease subunit A (1279 aa).

The UvrD-like helicase ATP-binding domain occupies 4-499; the sequence is TKWTDEQRQA…VKLFKNFRSR (496 aa). 25 to 32 serves as a coordination point for ATP; it reads AGAGAGKT. The UvrD-like helicase C-terminal domain maps to 526-853; it reads EEALKVGASY…RIMSIHKSKG (328 aa).

The protein belongs to the helicase family. AddA subfamily. Heterodimer of AddA and AddB/RexB. Mg(2+) is required as a cofactor.

The enzyme catalyses Couples ATP hydrolysis with the unwinding of duplex DNA by translocating in the 3'-5' direction.. It carries out the reaction ATP + H2O = ADP + phosphate + H(+). Functionally, the heterodimer acts as both an ATP-dependent DNA helicase and an ATP-dependent, dual-direction single-stranded exonuclease. Recognizes the chi site generating a DNA molecule suitable for the initiation of homologous recombination. The AddA nuclease domain is required for chi fragment generation; this subunit has the helicase and 3' -&gt; 5' nuclease activities. This Clostridium botulinum (strain Hall / ATCC 3502 / NCTC 13319 / Type A) protein is ATP-dependent helicase/nuclease subunit A.